Here is a 116-residue protein sequence, read N- to C-terminus: NADH-ubiquinone oxidoreductase chain 3 (116 aa).

Helical transmembrane passes span 3–23 (LITT…TISF), 56–76 (FFLI…LLPL), and 85–105 (PALT…GLIY).

This sequence belongs to the complex I subunit 3 family.

The protein resides in the mitochondrion membrane. It carries out the reaction a ubiquinone + NADH + 5 H(+)(in) = a ubiquinol + NAD(+) + 4 H(+)(out). Core subunit of the mitochondrial membrane respiratory chain NADH dehydrogenase (Complex I) that is believed to belong to the minimal assembly required for catalysis. Complex I functions in the transfer of electrons from NADH to the respiratory chain. The immediate electron acceptor for the enzyme is believed to be ubiquinone. The polypeptide is NADH-ubiquinone oxidoreductase chain 3 (MT-ND3) (Oncorhynchus masou (Cherry salmon)).